We begin with the raw amino-acid sequence, 308 residues long: GTPase Era (308 aa).

One can recognise an Era-type G domain in the interval 14–181 (RCGFVALIGA…KQALAAMVPP (168 aa)). The interval 22–29 (GAPNVGKS) is G1. A GTP-binding site is contributed by 22 to 29 (GAPNVGKS). A G2 region spans residues 48 to 52 (QTTRA). The interval 69 to 72 (DTPG) is G3. Residues 69–73 (DTPGI) and 131–134 (NKVD) contribute to the GTP site. Residues 131–134 (NKVD) are G4. Residues 160-162 (ISA) are G5. The region spanning 212-289 (LHQELPYQST…HLFLFVKVRE (78 aa)) is the KH type-2 domain.

The protein belongs to the TRAFAC class TrmE-Era-EngA-EngB-Septin-like GTPase superfamily. Era GTPase family. In terms of assembly, monomer.

The protein resides in the cytoplasm. Its subcellular location is the cell inner membrane. Its function is as follows. An essential GTPase that binds both GDP and GTP, with rapid nucleotide exchange. Plays a role in 16S rRNA processing and 30S ribosomal subunit biogenesis and possibly also in cell cycle regulation and energy metabolism. In Bradyrhizobium sp. (strain BTAi1 / ATCC BAA-1182), this protein is GTPase Era.